Reading from the N-terminus, the 61-residue chain is Probable tautomerase SAV1363 (61 aa).

Pro-2 serves as the catalytic Proton acceptor; via imino nitrogen.

This sequence belongs to the 4-oxalocrotonate tautomerase family.

The protein is Probable tautomerase SAV1363 of Staphylococcus aureus (strain Mu50 / ATCC 700699).